Here is a 359-residue protein sequence, read N- to C-terminus: Ferredoxin--NADP reductase (359 aa).

Residues D48, Q56, Y61, A101, F139, D304, and S345 each coordinate FAD.

It belongs to the ferredoxin--NADP reductase type 2 family. In terms of assembly, homodimer. Requires FAD as cofactor.

The enzyme catalyses 2 reduced [2Fe-2S]-[ferredoxin] + NADP(+) + H(+) = 2 oxidized [2Fe-2S]-[ferredoxin] + NADPH. This Ralstonia pickettii (strain 12J) protein is Ferredoxin--NADP reductase.